Reading from the N-terminus, the 368-residue chain is Probable endopolygalacturonase I (368 aa).

A signal peptide spans 1–18; sequence MHSYQLLGLAAVGSLVSA. The propeptide occupies 19 to 31; the sequence is APAPSRVSEFAKK. Cys-35 and Cys-50 form a disulfide bridge. PbH1 repeat units lie at residues 140-161, 162-192, and 193-214; these read VEDS…ISVQ, ATNV…DISE, and STGV…AINS. The Proton donor role is filled by Asp-207. Cys-209 and Cys-225 are oxidised to a cystine. His-229 is an active-site residue. PbH1 repeat units lie at residues 244–265, 273–295, and 307–352; these read VKNV…RIKT, VSEI…VIEQ, and STGI…DLSG. Asn-246 carries an N-linked (GlcNAc...) asparagine glycan. Cystine bridges form between Cys-335-Cys-340 and Cys-359-Cys-368.

The protein belongs to the glycosyl hydrolase 28 family.

Its subcellular location is the secreted. The catalysed reaction is (1,4-alpha-D-galacturonosyl)n+m + H2O = (1,4-alpha-D-galacturonosyl)n + (1,4-alpha-D-galacturonosyl)m.. In terms of biological role, involved in maceration and soft-rotting of plant tissue. Hydrolyzes the 1,4-alpha glycosidic bonds of de-esterified pectate in the smooth region of the plant cell wall. In Aspergillus niger (strain ATCC MYA-4892 / CBS 513.88 / FGSC A1513), this protein is Probable endopolygalacturonase I (pgaI).